Reading from the N-terminus, the 1477-residue chain is Lysine-specific demethylase rbr-2 (1477 aa).

A disordered region spans residues 1 to 37 (MRARRQENSISTPSAPSTSTSPRKKASIGNSRSKNHG). Residues 9 to 21 (SISTPSAPSTSTS) show a composition bias toward low complexity. Positions 56-97 (APIYYPTEEEFSDPIEYVAKIRHEAEKFGVVKIVPPANFKPP) constitute a JmjN domain. The region spanning 121–218 (VKEKHTFIDR…HIEPFNRNLK (98 aa)) is the ARID domain. Positions 222–314 (MKNDDESDDE…KAEGDDDDDE (93 aa)) are disordered. Residues 246-259 (MRTEIEVPNDKTTE) are compositionally biased toward basic and acidic residues. 2 stretches are compositionally biased toward basic residues: residues 272–283 (GRRRSKNKKASS) and 295–304 (NSTRGRKNKK). The PHD-type 1 zinc finger occupies 319-371 (QVFCVACNEGKDEDLLLLCDIDGCNNGRHTYCCDPVLDEVPEGEWRCPKCIES). One can recognise a JmjC domain in the interval 468 to 634 (QYASHAWNLN…KGRECVESYS (167 aa)). Histidine 514, aspartate 517, and histidine 602 together coordinate Fe cation. Positions 874 to 926 (IIDKLEKWMEQVEMWRNRAKDAIYREQEYSKEEIEKIIEEGDEYDIKLEEIDE) form a coiled coil. The PHD-type 2 zinc-finger motif lies at 1203–1257 (LEACSCLGFNKSDDSESTLTCIMCDSEFHVRCCEWSPFLEKLPEGCFLCVRCLRG). The tract at residues 1375-1404 (TAKRKRPSVSHKETSKKSRKRQSQASPSEY) is disordered. The PHD-type 3 zinc-finger motif lies at 1411-1466 (FKSCQARACLKPYGDSVNWVMCEAGCKNWFHVICLGFTLREINDMHEYRCSSCLDH).

Belongs to the JARID1 histone demethylase family. Fe(2+) is required as a cofactor.

It is found in the nucleus. The catalysed reaction is N(6),N(6),N(6)-trimethyl-L-lysyl(4)-[histone H3] + 3 2-oxoglutarate + 3 O2 = L-lysyl(4)-[histone H3] + 3 formaldehyde + 3 succinate + 3 CO2. Its function is as follows. Histone demethylase that specifically demethylates 'Lys-4' of histone H3, thereby playing a central role in histone code. Does not demethylate histone H3 'Lys-9', H3 'Lys-27', H3 'Lys-36', H3 'Lys-79' or H4 'Lys-20'. Demethylates trimethylated and dimethylated but not monomethylated H3 'Lys-4'. Required for normal longevity of the soma in a germline-dependent manner. Implicated in the epigenetic inheritance of lifespan over several generations. Involved in larval development and vulva formation. The polypeptide is Lysine-specific demethylase rbr-2 (rbr-2) (Caenorhabditis elegans).